The sequence spans 336 residues: Potassium channel subfamily K member 1 (336 aa).

Residues 1–20 (MLQSLAGSSCVRLVERHRSA) are Cytoplasmic-facing. Residues 21 to 41 (WCFGLLVLGYLLYLVFGAVVF) form a helical membrane-spanning segment. Residues 42-103 (SSVELPYEDL…SNASGNWNWD (62 aa)) lie on the Extracellular side of the membrane. A glycan (N-linked (GlcNAc...) asparagine) is linked at asparagine 95. Residues 104-116 (FTSALFFASTVLS) constitute an intramembrane region (helical). Residues 117–122 (TTGYGH) lie within the membrane without spanning it. The tract at residues 117 to 122 (TTGYGH) is selectivity filter 1. The Extracellular segment spans residues 123–132 (TVPLSDGGKA). A helical transmembrane segment spans residues 133–156 (FCIIYSVIGIPFTLLFLTAVVQRI). Residues 157–181 (TVHVTRRPVLYFHIRWGFSKQMVGI) are Cytoplasmic-facing. Residues 182-202 (VHAVVLGFVTVSCFFFIPAAV) form a helical membrane-spanning segment. Residues 203 to 211 (FSVLEDDWN) lie on the Extracellular side of the membrane. An intramembrane region (helical) is located at residues 212-224 (FLESFYFCFISLS). The tract at residues 225–230 (TIGLGD) is selectivity filter 2. An intramembrane segment occupies 225–231 (TIGLGDY). At 232 to 243 (VPGEGYNQKFRE) the chain is on the extracellular side. A helical transmembrane segment spans residues 244–267 (LYKIGITCYLLLGLIAMLVVLETF). Residues 268-336 (CELHELKKFR…SAYAEDSASH (69 aa)) are Cytoplasmic-facing. A Glycyl lysine isopeptide (Lys-Gly) (interchain with G-Cter in SUMO) cross-link involves residue lysine 274. The segment at 293–299 (IVEHDQL) is important for intracellular retention in recycling endosomes.

It belongs to the two pore domain potassium channel (TC 1.A.1.8) family. In terms of assembly, homodimer; disulfide-linked. Heterodimer with KCNK2; disulfide-linked. In astrocytes, forms mostly heterodimeric potassium channels with KCNK2, with only a minor proportion of functional channels containing homodimeric KCNK1. Interacts with KCNK3 and KCNK9, forming functional heterodimeric channels. Interacts with GNG4. Identified in a complex with PSD and ARF6; interacts only with PSD that is bound to ARF6. Interacts with UBE2I. Post-translationally, sumoylation is controversial. Sumoylated by UBE2I. Not sumoylated when expressed in xenopus oocytes or mammalian cells. Sumoylation inactivates the channel, but does not interfere with expression at the cell membrane. Sumoylation of a single subunit is sufficient to silence the dimeric channel. Sumoylation of KCNK1 is sufficient to silence heterodimeric channels formed by KCNK1 and KCNK3 or KCNK9. Desumoylated by SENP1; this activates the channel. Desumoylated by SENP1; this strongly increases halothane-mediated activation of heterodimeric channels formed with KCNK9. SENP1 treatment has no effect.

The protein localises to the cell membrane. Its subcellular location is the recycling endosome. The protein resides in the synaptic cell membrane. It localises to the cytoplasmic vesicle. It is found in the perikaryon. The protein localises to the cell projection. Its subcellular location is the dendrite. The protein resides in the apical cell membrane. It carries out the reaction K(+)(in) = K(+)(out). The catalysed reaction is NH4(+)(in) = NH4(+)(out). It catalyses the reaction Na(+)(in) = Na(+)(out). The enzyme catalyses Rb(+)(in) = Rb(+)(out). It carries out the reaction Cs(+)(in) = Cs(+)(out). The catalysed reaction is Li(+)(in) = Li(+)(out). It catalyses the reaction L-glutamate(out) = L-glutamate(in). The enzyme catalyses chloride(in) = chloride(out). Functionally, ion channel that contributes to passive transmembrane potassium transport and to the regulation of the resting membrane potential in brain astrocytes, but also in kidney and in other tissues. Forms dimeric channels through which potassium ions pass in accordance with their electrochemical gradient. The channel is selective for K(+) ions at physiological potassium concentrations and at neutral pH, but becomes permeable to Na(+) at subphysiological K(+) levels and upon acidification of the extracellular medium. The homodimer has very low potassium channel activity, when expressed in heterologous systems, and can function as weakly inward rectifying potassium channel. Channel activity is modulated by activation of serotonin receptors. Heterodimeric channels containing KCNK1 and KCNK2 have much higher activity, and may represent the predominant form in astrocytes. Heterodimeric channels containing KCNK1 and KCNK3 or KCNK9 have much higher activity. Heterodimeric channels formed by KCNK1 and KCNK9 may contribute to halothane-sensitive currents. Mediates outward rectifying potassium currents in dentate gyrus granule cells and contributes to the regulation of their resting membrane potential. Contributes to the regulation of action potential firing in dentate gyrus granule cells and down-regulates their intrinsic excitability. In astrocytes, the heterodimer formed by KCNK1 and KCNK2 is required for rapid glutamate release in response to activation of G-protein coupled receptors, such as F2R and CNR1. Required for normal ion and water transport in the kidney. Contributes to the regulation of the resting membrane potential of pancreatic beta cells. The low channel activity of homodimeric KCNK1 may be due to sumoylation. The low channel activity may be due to rapid internalization from the cell membrane and retention in recycling endosomes. Permeable to monovalent cations with ion selectivity for K(+) &gt; Rb(+) &gt;&gt; NH4(+) &gt;&gt; Cs(+) = Na(+) = Li(+). The chain is Potassium channel subfamily K member 1 from Cavia porcellus (Guinea pig).